A 566-amino-acid chain; its full sequence is Proline--tRNA ligase (566 aa).

Belongs to the class-II aminoacyl-tRNA synthetase family. ProS type 1 subfamily. In terms of assembly, homodimer.

Its subcellular location is the cytoplasm. It catalyses the reaction tRNA(Pro) + L-proline + ATP = L-prolyl-tRNA(Pro) + AMP + diphosphate. Functionally, catalyzes the attachment of proline to tRNA(Pro) in a two-step reaction: proline is first activated by ATP to form Pro-AMP and then transferred to the acceptor end of tRNA(Pro). As ProRS can inadvertently accommodate and process non-cognate amino acids such as alanine and cysteine, to avoid such errors it has two additional distinct editing activities against alanine. One activity is designated as 'pretransfer' editing and involves the tRNA(Pro)-independent hydrolysis of activated Ala-AMP. The other activity is designated 'posttransfer' editing and involves deacylation of mischarged Ala-tRNA(Pro). The misacylated Cys-tRNA(Pro) is not edited by ProRS. The sequence is that of Proline--tRNA ligase from Bacillus cereus (strain Q1).